Reading from the N-terminus, the 118-residue chain is Fluoride-specific ion channel FluC 1 (118 aa).

The next 4 helical transmembrane spans lie at 5 to 25 (FLLV…ISIF), 39 to 59 (FFIN…ALGP), 61 to 81 (WQLF…TFKV), and 98 to 118 (YVGL…MLGV). Na(+) is bound by residues Gly71 and Thr74.

Belongs to the fluoride channel Fluc/FEX (TC 1.A.43) family.

It is found in the cell membrane. The catalysed reaction is fluoride(in) = fluoride(out). Its activity is regulated as follows. Na(+) is not transported, but it plays an essential structural role and its presence is essential for fluoride channel function. In terms of biological role, fluoride-specific ion channel. Important for reducing fluoride concentration in the cell, thus reducing its toxicity. The polypeptide is Fluoride-specific ion channel FluC 1 (Listeria innocua serovar 6a (strain ATCC BAA-680 / CLIP 11262)).